The sequence spans 23 residues: Paralytic peptide 2 (23 aa).

Cysteines 7 and 19 form a disulfide.

Belongs to the GBP/PSP1/paralytic peptide family. In terms of tissue distribution, hemolymph.

Its function is as follows. Causes rapid, rigid paralysis when injected into Lepidopteran larvae. The physiological role may be to reduce hemolymph loss following injury and promote wound healing. This chain is Paralytic peptide 2, found in Spodoptera exigua (Beet armyworm).